The primary structure comprises 413 residues: Gamma-glutamyl phosphate reductase (413 aa).

The protein belongs to the gamma-glutamyl phosphate reductase family.

Its subcellular location is the cytoplasm. It catalyses the reaction L-glutamate 5-semialdehyde + phosphate + NADP(+) = L-glutamyl 5-phosphate + NADPH + H(+). It participates in amino-acid biosynthesis; L-proline biosynthesis; L-glutamate 5-semialdehyde from L-glutamate: step 2/2. Catalyzes the NADPH-dependent reduction of L-glutamate 5-phosphate into L-glutamate 5-semialdehyde and phosphate. The product spontaneously undergoes cyclization to form 1-pyrroline-5-carboxylate. The sequence is that of Gamma-glutamyl phosphate reductase from Rhodococcus jostii (strain RHA1).